Consider the following 207-residue polypeptide: MKAIIQRVTRASVTVGEEQISSIGRGLCVLLGISVEDTQKDVDYMVRKILNLRVFEDENGRAWSRSVMDGELEVLCVSQFTLQCLLKGNKPDYHAAMPAELAQPFYNNMLEQLRETYKPELIKDGQFGAKMQVLIQNDGPVTIQLESPPAPTDPKLLSKQEKQQQRKEKTRSKGPSDSSREKAAQRSKVDPSASSGAEGDVSSEREP.

The Gly-cisPro motif, important for rejection of L-amino acids motif lies at glycine 139–proline 140. The tract at residues threonine 142 to proline 207 is disordered. Basic and acidic residues-rich tracts occupy residues leucine 156 to lysine 167 and serine 178 to valine 189.

The protein belongs to the DTD family. As to quaternary structure, homodimer.

The protein resides in the cytoplasm. The catalysed reaction is a D-aminoacyl-tRNA + H2O = a tRNA + a D-alpha-amino acid + H(+). It carries out the reaction glycyl-tRNA(Ala) + H2O = tRNA(Ala) + glycine + H(+). Functionally, D-aminoacyl-tRNA deacylase, with no observable activity on tRNAs charged with their cognate L-amino acid. Hydrolyzes correctly charged, achiral, glycyl-tRNA(Gly). Deacylates mischarged D.melanogaster and E.coli glycyl-tRNA(Ala), protecting cells against glycine mischarging by AlaRS. Acts via tRNA-based rather than protein-based catalysis; rejects L-amino acids rather than detecting D-amino acids in the active site. By recycling D-aminoacyl-tRNA to D-amino acids and free tRNA molecules, this enzyme counteracts the toxicity associated with the formation of D-aminoacyl-tRNA entities in vivo and helps enforce protein L-homochirality. The sequence is that of D-aminoacyl-tRNA deacylase 1 from Danio rerio (Zebrafish).